Reading from the N-terminus, the 602-residue chain is UvrABC system protein C (602 aa).

In terms of domain architecture, GIY-YIG spans 17–94; sequence KTSGCYKMYS…IKKYKPTYNI (78 aa). The region spanning 199-234 is the UVR domain; the sequence is SKLLNDIEIKMKEVIMKENFEAAIKLKETKKSLIEI.

This sequence belongs to the UvrC family. In terms of assembly, interacts with UvrB in an incision complex.

The protein localises to the cytoplasm. Functionally, the UvrABC repair system catalyzes the recognition and processing of DNA lesions. UvrC both incises the 5' and 3' sides of the lesion. The N-terminal half is responsible for the 3' incision and the C-terminal half is responsible for the 5' incision. This is UvrABC system protein C from Borrelia duttonii (strain Ly).